We begin with the raw amino-acid sequence, 365 residues long: Alanine racemase (365 aa).

Residue lysine 32 is the Proton acceptor; specific for D-alanine of the active site. The residue at position 32 (lysine 32) is an N6-(pyridoxal phosphate)lysine. Arginine 128 lines the substrate pocket. Tyrosine 257 functions as the Proton acceptor; specific for L-alanine in the catalytic mechanism. Methionine 305 serves as a coordination point for substrate.

This sequence belongs to the alanine racemase family. Pyridoxal 5'-phosphate serves as cofactor.

The catalysed reaction is L-alanine = D-alanine. Its pathway is amino-acid biosynthesis; D-alanine biosynthesis; D-alanine from L-alanine: step 1/1. In terms of biological role, catalyzes the interconversion of L-alanine and D-alanine. May also act on other amino acids. The sequence is that of Alanine racemase (alr) from Francisella tularensis subsp. tularensis (strain SCHU S4 / Schu 4).